A 237-amino-acid chain; its full sequence is Aliphatic sulfonates import ATP-binding protein SsuB 1 (237 aa).

The 217-residue stretch at 5-221 folds into the ABC transporter domain; that stretch reads LMNIRVDRKA…PRDRRDPLLA (217 aa). Position 38–45 (38–45) interacts with ATP; the sequence is GPSGCGKS.

It belongs to the ABC transporter superfamily. Aliphatic sulfonates importer (TC 3.A.1.17.2) family. As to quaternary structure, the complex is composed of two ATP-binding proteins (SsuB), two transmembrane proteins (SsuC) and a solute-binding protein (SsuA).

It is found in the cell inner membrane. The enzyme catalyses ATP + H2O + aliphatic sulfonate-[sulfonate-binding protein]Side 1 = ADP + phosphate + aliphatic sulfonateSide 2 + [sulfonate-binding protein]Side 1.. Part of the ABC transporter complex SsuABC involved in aliphatic sulfonates import. Responsible for energy coupling to the transport system. The protein is Aliphatic sulfonates import ATP-binding protein SsuB 1 of Pseudomonas savastanoi pv. phaseolicola (strain 1448A / Race 6) (Pseudomonas syringae pv. phaseolicola (strain 1448A / Race 6)).